The primary structure comprises 117 residues: Large ribosomal subunit protein bL20 (117 aa).

It belongs to the bacterial ribosomal protein bL20 family.

Its function is as follows. Binds directly to 23S ribosomal RNA and is necessary for the in vitro assembly process of the 50S ribosomal subunit. It is not involved in the protein synthesizing functions of that subunit. The polypeptide is Large ribosomal subunit protein bL20 (Rickettsia peacockii (strain Rustic)).